The chain runs to 69 residues: UPF0337 protein YjbJ (69 aa).

The protein belongs to the UPF0337 (CsbD) family.

The sequence is that of UPF0337 protein YjbJ (yjbJ) from Escherichia coli O157:H7.